A 297-amino-acid chain; its full sequence is GTP cyclohydrolase FolE2 (297 aa).

2 disordered regions span residues 1–21 (MTHA…SERD) and 180–207 (IRAE…RERP).

It belongs to the GTP cyclohydrolase IV family.

The enzyme catalyses GTP + H2O = 7,8-dihydroneopterin 3'-triphosphate + formate + H(+). The protein operates within cofactor biosynthesis; 7,8-dihydroneopterin triphosphate biosynthesis; 7,8-dihydroneopterin triphosphate from GTP: step 1/1. In terms of biological role, converts GTP to 7,8-dihydroneopterin triphosphate. In Methylibium petroleiphilum (strain ATCC BAA-1232 / LMG 22953 / PM1), this protein is GTP cyclohydrolase FolE2.